Here is a 425-residue protein sequence, read N- to C-terminus: Glutamate-1-semialdehyde 2,1-aminomutase (425 aa).

N6-(pyridoxal phosphate)lysine is present on Lys265.

This sequence belongs to the class-III pyridoxal-phosphate-dependent aminotransferase family. HemL subfamily. In terms of assembly, homodimer. It depends on pyridoxal 5'-phosphate as a cofactor.

It localises to the cytoplasm. It carries out the reaction (S)-4-amino-5-oxopentanoate = 5-aminolevulinate. It participates in porphyrin-containing compound metabolism; protoporphyrin-IX biosynthesis; 5-aminolevulinate from L-glutamyl-tRNA(Glu): step 2/2. The protein is Glutamate-1-semialdehyde 2,1-aminomutase of Clostridium perfringens (strain SM101 / Type A).